We begin with the raw amino-acid sequence, 198 residues long: MORN repeat-containing protein 4 homolog (198 aa).

Ala-2 carries the N-acetylalanine modification. Positions 23–45 are enriched in low complexity; it reads QHQQHPHQQGQHGHHQQGQGQSQ. Residues 23-46 form a disordered region; that stretch reads QHQQHPHQQGQHGHHQQGQGQSQY. 4 MORN repeats span residues 64-87, 88-109, 111-132, and 134-153; these read YIGEWNQRGQKHGIGHLQFADGTR, YDGQFQEGLSQGVGCLWFADGA, YEGEFHQGWFHGNGIFWRADGM, and YEGEFRGGKIWGLGLLTFQD.

In terms of assembly, interacts with ninaC. In terms of processing, phosphorylated under dark conditions and is dephosphorylated by light exposure. Retina. Expressed primarily in the phototransducing compartment of photoreceptor cells, the rhabdomeres and its expression is dependent on ninaC protein (at protein level).

It is found in the membrane. It localises to the cell projection. The protein localises to the rhabdomere membrane. Its function is as follows. Plays a role in promoting axonal degeneration following neuronal injury by toxic insult or trauma. Organizes rhabdomeric components to suppress random activation of the phototransduction cascade and thus increases the signaling fidelity of dark-adapted photoreceptors. The rtp/ninaC complex is required for stability of inad and inac and the normal termination of phototransduction in the retina. This is MORN repeat-containing protein 4 homolog from Drosophila melanogaster (Fruit fly).